The chain runs to 186 residues: Peptidoglycan-recognition protein SD (186 aa).

A signal peptide spans 1–18 (MTWIGLLIVGLTAIAVQG). Residues 47–169 (AVIAHTAGGA…RQVSATMSPG (123 aa)) enclose the N-acetylmuramoyl-L-alanine amidase domain. Cys-57 and Cys-63 are disulfide-bonded. N-linked (GlcNAc...) asparagine glycosylation is present at Asn-181.

The protein belongs to the N-acetylmuramoyl-L-alanine amidase 2 family.

Its subcellular location is the secreted. Functionally, peptidoglycan-recognition protein that plays a key role in innate immunity by binding to peptidoglycans (PGN) of Gram-positive bacteria and activating the Toll pathway. Has no activity against on Gram-negative bacteria and fungi. Shows some partial redundancy with PRPGP-SA in Gram-positive bacteria recognition. May act by activating the proteolytic cleavage of Spatzle and the subsequent activation of Toll pathway. Recognizes S.aureus PGN. The chain is Peptidoglycan-recognition protein SD (PGRP-SD) from Drosophila simulans (Fruit fly).